A 171-amino-acid chain; its full sequence is Adenine phosphoribosyltransferase (171 aa).

The protein belongs to the purine/pyrimidine phosphoribosyltransferase family. Homodimer.

The protein localises to the cytoplasm. The catalysed reaction is AMP + diphosphate = 5-phospho-alpha-D-ribose 1-diphosphate + adenine. Its pathway is purine metabolism; AMP biosynthesis via salvage pathway; AMP from adenine: step 1/1. Functionally, catalyzes a salvage reaction resulting in the formation of AMP, that is energically less costly than de novo synthesis. The chain is Adenine phosphoribosyltransferase from Halalkalibacterium halodurans (strain ATCC BAA-125 / DSM 18197 / FERM 7344 / JCM 9153 / C-125) (Bacillus halodurans).